A 251-amino-acid polypeptide reads, in one-letter code: Aspartate/glutamate leucyltransferase (251 aa).

It belongs to the R-transferase family. Bpt subfamily.

Its subcellular location is the cytoplasm. The catalysed reaction is N-terminal L-glutamyl-[protein] + L-leucyl-tRNA(Leu) = N-terminal L-leucyl-L-glutamyl-[protein] + tRNA(Leu) + H(+). The enzyme catalyses N-terminal L-aspartyl-[protein] + L-leucyl-tRNA(Leu) = N-terminal L-leucyl-L-aspartyl-[protein] + tRNA(Leu) + H(+). Functionally, functions in the N-end rule pathway of protein degradation where it conjugates Leu from its aminoacyl-tRNA to the N-termini of proteins containing an N-terminal aspartate or glutamate. The polypeptide is Aspartate/glutamate leucyltransferase (Xanthomonas oryzae pv. oryzae (strain MAFF 311018)).